Here is a 185-residue protein sequence, read N- to C-terminus: Photosystem I assembly protein Ycf4 (185 aa).

2 consecutive transmembrane segments (helical) span residues 21-43 and 68-90; these read NFFW…ISSY and FYGI…NVGS.

The protein belongs to the Ycf4 family.

The protein localises to the plastid. It is found in the chloroplast thylakoid membrane. In terms of biological role, seems to be required for the assembly of the photosystem I complex. This Aegilops tauschii (Tausch's goatgrass) protein is Photosystem I assembly protein Ycf4.